A 446-amino-acid polypeptide reads, in one-letter code: N-succinylarginine dihydrolase (446 aa).

Substrate-binding positions include 21–30 (AGLSWGNVAS), N112, and 139–140 (HR). E176 is an active-site residue. R216 serves as a coordination point for substrate. H252 is a catalytic residue. The substrate site is built by D254 and N364. Catalysis depends on C370, which acts as the Nucleophile.

This sequence belongs to the succinylarginine dihydrolase family. Homodimer.

It catalyses the reaction N(2)-succinyl-L-arginine + 2 H2O + 2 H(+) = N(2)-succinyl-L-ornithine + 2 NH4(+) + CO2. It functions in the pathway amino-acid degradation; L-arginine degradation via AST pathway; L-glutamate and succinate from L-arginine: step 2/5. Its function is as follows. Catalyzes the hydrolysis of N(2)-succinylarginine into N(2)-succinylornithine, ammonia and CO(2). In Marinobacter nauticus (strain ATCC 700491 / DSM 11845 / VT8) (Marinobacter aquaeolei), this protein is N-succinylarginine dihydrolase.